The sequence spans 247 residues: Adenosylcobinamide-GDP ribazoletransferase (247 aa).

Helical transmembrane passes span 34–54, 59–79, 113–133, 138–158, 171–191, and 194–214; these read IVMF…IFIL, CGIP…TGGF, GGLA…ELAL, MLAA…LLMY, VFIG…AVIV, and VLLP…AIFI.

This sequence belongs to the CobS family. The cofactor is Mg(2+).

The protein localises to the cell inner membrane. It carries out the reaction alpha-ribazole + adenosylcob(III)inamide-GDP = adenosylcob(III)alamin + GMP + H(+). The enzyme catalyses alpha-ribazole 5'-phosphate + adenosylcob(III)inamide-GDP = adenosylcob(III)alamin 5'-phosphate + GMP + H(+). It participates in cofactor biosynthesis; adenosylcobalamin biosynthesis; adenosylcobalamin from cob(II)yrinate a,c-diamide: step 7/7. Its function is as follows. Joins adenosylcobinamide-GDP and alpha-ribazole to generate adenosylcobalamin (Ado-cobalamin). Also synthesizes adenosylcobalamin 5'-phosphate from adenosylcobinamide-GDP and alpha-ribazole 5'-phosphate. This is Adenosylcobinamide-GDP ribazoletransferase from Salmonella paratyphi A (strain ATCC 9150 / SARB42).